The sequence spans 199 residues: Outer-membrane lipoprotein LolB (199 aa).

An N-terminal signal peptide occupies residues 1 to 28 (MSVCPAPRSPVRWLHAFTLCLLLAVLAG). Cys-29 carries N-palmitoyl cysteine lipidation. The S-diacylglycerol cysteine moiety is linked to residue Cys-29.

It belongs to the LolB family. As to quaternary structure, monomer.

The protein resides in the cell outer membrane. Its function is as follows. Plays a critical role in the incorporation of lipoproteins in the outer membrane after they are released by the LolA protein. The chain is Outer-membrane lipoprotein LolB from Bordetella parapertussis (strain 12822 / ATCC BAA-587 / NCTC 13253).